Reading from the N-terminus, the 481-residue chain is Glutamate--tRNA ligase (481 aa).

The short motif at 9-19 is the 'HIGH' region element; the sequence is PSPTGNLHIGT. The Zn(2+) site is built by Cys-98, Cys-100, His-125, and Asp-127. The 'KMSKS' region motif lies at 248 to 252; it reads KLSKR. Lys-251 is an ATP binding site.

Belongs to the class-I aminoacyl-tRNA synthetase family. Glutamate--tRNA ligase type 1 subfamily. As to quaternary structure, monomer. Zn(2+) serves as cofactor.

It localises to the cytoplasm. It catalyses the reaction tRNA(Glu) + L-glutamate + ATP = L-glutamyl-tRNA(Glu) + AMP + diphosphate. Functionally, catalyzes the attachment of glutamate to tRNA(Glu) in a two-step reaction: glutamate is first activated by ATP to form Glu-AMP and then transferred to the acceptor end of tRNA(Glu). The chain is Glutamate--tRNA ligase from Synechococcus elongatus (strain ATCC 33912 / PCC 7942 / FACHB-805) (Anacystis nidulans R2).